Consider the following 961-residue polypeptide: Transcription factor MYB3R-4 (961 aa).

The tract at residues 1–33 (MEAESSTPQERIPKLRHGRTSGPARRSTRGQWT) is disordered. HTH myb-type domains lie at 24–75 (ARRS…QKVL), 76–131 (NPEL…NPAI), and 132–182 (NKEA…KKKL). 3 DNA-binding regions (H-T-H motif) span residues 52–75 (WKKIAEYFKDRTDVQCLHRWQKVL), 104–127 (WSTIARFLPGRIGKQCRERWHNHL), and 155–178 (WAELTKFLPGRSDNGIKNHWHSSV). Disordered regions lie at residues 390 to 457 (GHSV…LIIS) and 534 to 555 (RPHSLPKHEPNMTNEQHHEDMG). Polar residues-rich tracts occupy residues 391-405 (HSVSRSLTQEPNEFN) and 416-430 (SSASDRQISEATKSP). Residues 431–444 (TQSSSSRFTATAAS) are compositionally biased toward low complexity. Residues 534–554 (RPHSLPKHEPNMTNEQHHEDM) show a composition bias toward basic and acidic residues. The Nuclear localization signal signature appears at 612 to 619 (GKKTLVGA). The disordered stretch occupies residues 756-781 (NTGKPVLSTPGQSVTKAEKAQVSTPR). Over residues 764-781 (TPGQSVTKAEKAQVSTPR) the composition is skewed to polar residues.

As to quaternary structure, component of a DREAM-like complex which modulates a variety of developmentally regulated genes and of the mitotic genes in proliferating and differentiated cells. Associates with CDKA-1, RBR1 and E2FB, but not with E2FC, in proliferating cells, at early stages of leaves development. Expressed in roots, cotyledons and leaves, especially in vascular tissues, and in flowers.

The protein resides in the nucleus. Its function is as follows. Transcription factor that binds 5'-AACGG-3' motifs in gene promoters. Involved in the regulation of cytokinesis, probably via the activation of several G2/M phase-specific genes transcription (e.g. KNOLLE). Required for the maintenance of diploidy. Functionally, involved in transcription regulation during induced endoreduplication at the powdery mildew (e.g. G.orontii) infection site, thus promoting G.orontii growth and reproduction. The protein is Transcription factor MYB3R-4 of Arabidopsis thaliana (Mouse-ear cress).